An 814-amino-acid chain; its full sequence is Exostosin-like-3 homolog (814 aa).

At 1–14 (MAIKLNGSSRSFVP) the chain is on the cytoplasmic side. Residues 15–35 (SLRVSAFLIFIFFVITYIIIY) traverse the membrane as a helical; Signal-anchor for type II membrane protein segment. N-linked (GlcNAc...) asparagine glycans are attached at residues asparagine 36, asparagine 227, asparagine 297, asparagine 322, asparagine 454, and asparagine 492. Residues 36–814 (NVSFSEPSWI…QNHQKCFKYV (779 aa)) lie on the Lumenal side of the membrane. The UDP-N-acetyl-alpha-D-glucosamine site is built by arginine 570, asparagine 595, asparagine 620, arginine 625, aspartate 641, aspartate 642, and aspartate 643. Aspartate 643 lines the Mn(2+) pocket. An N-linked (GlcNAc...) asparagine glycan is attached at asparagine 685. Cysteines 726 and 774 form a disulfide. Glutamate 727, aspartate 728, and arginine 771 together coordinate UDP-N-acetyl-alpha-D-glucosamine. Aspartate 728 is an active-site residue.

This sequence belongs to the glycosyltransferase 47 family. Interacts with rib-1. The cofactor is Mn(2+).

Its subcellular location is the endoplasmic reticulum membrane. The protein resides in the golgi apparatus membrane. The enzyme catalyses 3-O-(beta-D-GlcA-(1-&gt;3)-beta-D-Gal-(1-&gt;3)-beta-D-Gal-(1-&gt;4)-beta-D-Xyl)-L-seryl-[protein] + UDP-N-acetyl-alpha-D-glucosamine = 3-O-(alpha-D-GlcNAc-(1-&gt;4)-beta-D-GlcA-(1-&gt;3)-beta-D-Gal-(1-&gt;3)-beta-D-Gal-(1-&gt;4)-beta-D-Xyl)-L-seryl-[protein] + UDP + H(+). It carries out the reaction 3-O-{[(1-&gt;4)-beta-D-GlcA-(1-&gt;4)-alpha-D-GlcNAc](n)-(1-&gt;4)-beta-D-GlcA-(1-&gt;3)-beta-D-Gal-(1-&gt;3)-beta-D-Gal-(1-&gt;4)-beta-D-Xyl}-L-seryl-[protein] + UDP-N-acetyl-alpha-D-glucosamine = 3-O-{alpha-D-GlcNAc-[(1-&gt;4)-beta-D-GlcA-(1-&gt;4)-alpha-D-GlcNAc](n)-(1-&gt;4)-beta-D-GlcA-(1-&gt;3)-beta-D-Gal-(1-&gt;3)-beta-D-Gal-(1-&gt;4)-beta-D-Xyl}-L-seryl-[protein] + UDP + H(+). It catalyses the reaction 3-O-{alpha-D-GlcNAc-[(1-&gt;4)-beta-D-GlcA-(1-&gt;4)-alpha-D-GlcNAc](n)-(1-&gt;4)-beta-D-GlcA-(1-&gt;3)-beta-D-Gal-(1-&gt;3)-beta-D-Gal-(1-&gt;4)-beta-D-Xyl}-L-seryl-[protein] + UDP-alpha-D-glucuronate = 3-O-{[(1-&gt;4)-beta-D-GlcA-(1-&gt;4)-alpha-D-GlcNAc](n+1)-(1-&gt;4)-beta-D-GlcA-(1-&gt;3)-beta-D-Gal-(1-&gt;3)-beta-D-Gal-(1-&gt;4)-beta-D-Xyl}-L-seryl-[protein] + UDP + H(+). The protein operates within glycan metabolism; heparan sulfate biosynthesis. Binding to rib-1 is required for GlcAT-II activity and for increasing GlcNAc-II activity in vitro. In terms of biological role, glycosyltransferase required for the biosynthesis of heparan sulfate. Initiates heparan sulfate synthesis by transferring GlcNAc to the (GlcA-Gal-Gal-Xyl-)Ser core linker (GlcNAcT-I activity). In association with rib-1, is also responsible for the alternating addition of beta-1-4-linked glucuronic acid (GlcA) and alpha-1-4-linked N-acetylglucosamine (GlcNAc) units to nascent heparan sulfate chains (GlcNAcT-II and GlcAT-II activities). Required for normal ventral epidermal enclosure during the early stages of embryonic development. In addition, involved in the elongation of the pharyngeal isthmus during the later stages of embryonic development. Involved in the directed migration of hermaphrodite-specific neurons. The sequence is that of Exostosin-like-3 homolog (rib-2) from Caenorhabditis elegans.